Reading from the N-terminus, the 314-residue chain is 4-hydroxy-3-methylbut-2-enyl diphosphate reductase (314 aa).

A [4Fe-4S] cluster-binding site is contributed by C12. Positions 43 and 81 each coordinate (2E)-4-hydroxy-3-methylbut-2-enyl diphosphate. H43 and H81 together coordinate dimethylallyl diphosphate. Residues H43 and H81 each contribute to the isopentenyl diphosphate site. C103 serves as a coordination point for [4Fe-4S] cluster. H131 lines the (2E)-4-hydroxy-3-methylbut-2-enyl diphosphate pocket. H131 is a binding site for dimethylallyl diphosphate. Position 131 (H131) interacts with isopentenyl diphosphate. The active-site Proton donor is the E133. T170 is a (2E)-4-hydroxy-3-methylbut-2-enyl diphosphate binding site. Residue C198 participates in [4Fe-4S] cluster binding. (2E)-4-hydroxy-3-methylbut-2-enyl diphosphate contacts are provided by S226, N228, and S271. Dimethylallyl diphosphate contacts are provided by S226, N228, and S271. 3 residues coordinate isopentenyl diphosphate: S226, N228, and S271.

It belongs to the IspH family. Requires [4Fe-4S] cluster as cofactor.

The enzyme catalyses isopentenyl diphosphate + 2 oxidized [2Fe-2S]-[ferredoxin] + H2O = (2E)-4-hydroxy-3-methylbut-2-enyl diphosphate + 2 reduced [2Fe-2S]-[ferredoxin] + 2 H(+). It catalyses the reaction dimethylallyl diphosphate + 2 oxidized [2Fe-2S]-[ferredoxin] + H2O = (2E)-4-hydroxy-3-methylbut-2-enyl diphosphate + 2 reduced [2Fe-2S]-[ferredoxin] + 2 H(+). It functions in the pathway isoprenoid biosynthesis; dimethylallyl diphosphate biosynthesis; dimethylallyl diphosphate from (2E)-4-hydroxy-3-methylbutenyl diphosphate: step 1/1. The protein operates within isoprenoid biosynthesis; isopentenyl diphosphate biosynthesis via DXP pathway; isopentenyl diphosphate from 1-deoxy-D-xylulose 5-phosphate: step 6/6. Its function is as follows. Catalyzes the conversion of 1-hydroxy-2-methyl-2-(E)-butenyl 4-diphosphate (HMBPP) into a mixture of isopentenyl diphosphate (IPP) and dimethylallyl diphosphate (DMAPP). Acts in the terminal step of the DOXP/MEP pathway for isoprenoid precursor biosynthesis. The chain is 4-hydroxy-3-methylbut-2-enyl diphosphate reductase from Bacillus velezensis (strain DSM 23117 / BGSC 10A6 / LMG 26770 / FZB42) (Bacillus amyloliquefaciens subsp. plantarum).